Here is a 1490-residue protein sequence, read N- to C-terminus: DNA-directed RNA polymerase subunit beta' (1490 aa).

Zn(2+) contacts are provided by cysteine 67, cysteine 69, cysteine 82, and cysteine 85. The Mg(2+) site is built by aspartate 499, aspartate 501, and aspartate 503. The Zn(2+) site is built by cysteine 868, cysteine 944, cysteine 951, and cysteine 954.

Belongs to the RNA polymerase beta' chain family. As to quaternary structure, the RNAP catalytic core consists of 2 alpha, 1 beta, 1 beta' and 1 omega subunit. When a sigma factor is associated with the core the holoenzyme is formed, which can initiate transcription. Requires Mg(2+) as cofactor. The cofactor is Zn(2+).

It catalyses the reaction RNA(n) + a ribonucleoside 5'-triphosphate = RNA(n+1) + diphosphate. Functionally, DNA-dependent RNA polymerase catalyzes the transcription of DNA into RNA using the four ribonucleoside triphosphates as substrates. This Chlorobaculum tepidum (strain ATCC 49652 / DSM 12025 / NBRC 103806 / TLS) (Chlorobium tepidum) protein is DNA-directed RNA polymerase subunit beta'.